A 145-amino-acid polypeptide reads, in one-letter code: 3-hydroxyacyl-[acyl-carrier-protein] dehydratase FabZ (145 aa).

His-49 is an active-site residue.

The protein belongs to the thioester dehydratase family. FabZ subfamily.

The protein localises to the cytoplasm. The enzyme catalyses a (3R)-hydroxyacyl-[ACP] = a (2E)-enoyl-[ACP] + H2O. Functionally, involved in unsaturated fatty acids biosynthesis. Catalyzes the dehydration of short chain beta-hydroxyacyl-ACPs and long chain saturated and unsaturated beta-hydroxyacyl-ACPs. In Rickettsia bellii (strain RML369-C), this protein is 3-hydroxyacyl-[acyl-carrier-protein] dehydratase FabZ.